Consider the following 478-residue polypeptide: Glutamate-1-semialdehyde 2,1-aminomutase, chloroplastic (478 aa).

The transit peptide at 1–40 (MAGAAAASAAAAAVASGISARPVAPRPSPSRARAPRSVVR) directs the protein to the chloroplast. The interval 15 to 36 (ASGISARPVAPRPSPSRARAPR) is disordered. Residue Lys318 is modified to N6-(pyridoxal phosphate)lysine.

Belongs to the class-III pyridoxal-phosphate-dependent aminotransferase family. HemL subfamily. In terms of assembly, homodimer. Requires pyridoxal 5'-phosphate as cofactor.

It is found in the plastid. The protein resides in the chloroplast. It catalyses the reaction (S)-4-amino-5-oxopentanoate = 5-aminolevulinate. It participates in porphyrin-containing compound metabolism; protoporphyrin-IX biosynthesis; 5-aminolevulinate from L-glutamyl-tRNA(Glu): step 2/2. The protein operates within porphyrin-containing compound metabolism; chlorophyll biosynthesis. The sequence is that of Glutamate-1-semialdehyde 2,1-aminomutase, chloroplastic (GSA) from Oryza sativa subsp. japonica (Rice).